A 288-amino-acid chain; its full sequence is Pantothenate synthetase (288 aa).

An ATP-binding site is contributed by 31–38 (MGNLHRGH). The active-site Proton donor is the His-38. Gln-62 contacts (R)-pantoate. Residue Gln-62 coordinates beta-alanine. An ATP-binding site is contributed by 150-153 (GQKD). Gln-156 is a binding site for (R)-pantoate. ATP is bound by residues Ile-179 and 187 to 190 (LSSR).

This sequence belongs to the pantothenate synthetase family. Homodimer.

The protein localises to the cytoplasm. The enzyme catalyses (R)-pantoate + beta-alanine + ATP = (R)-pantothenate + AMP + diphosphate + H(+). It functions in the pathway cofactor biosynthesis; (R)-pantothenate biosynthesis; (R)-pantothenate from (R)-pantoate and beta-alanine: step 1/1. Its function is as follows. Catalyzes the condensation of pantoate with beta-alanine in an ATP-dependent reaction via a pantoyl-adenylate intermediate. The polypeptide is Pantothenate synthetase (Wigglesworthia glossinidia brevipalpis).